The sequence spans 699 residues: Elongation factor G (699 aa).

In terms of domain architecture, tr-type G spans 8-288 (EDYRNFGIMA…AVVDYLPSPL (281 aa)). GTP-binding positions include 17–24 (AHIDAGKT), 86–90 (DTPGH), and 140–143 (NKMD).

The protein belongs to the TRAFAC class translation factor GTPase superfamily. Classic translation factor GTPase family. EF-G/EF-2 subfamily.

The protein localises to the cytoplasm. Functionally, catalyzes the GTP-dependent ribosomal translocation step during translation elongation. During this step, the ribosome changes from the pre-translocational (PRE) to the post-translocational (POST) state as the newly formed A-site-bound peptidyl-tRNA and P-site-bound deacylated tRNA move to the P and E sites, respectively. Catalyzes the coordinated movement of the two tRNA molecules, the mRNA and conformational changes in the ribosome. This Rhizobium etli (strain CIAT 652) protein is Elongation factor G.